We begin with the raw amino-acid sequence, 237 residues long: ATP-dependent dethiobiotin synthetase BioD (237 aa).

Gly-21–Val-26 contributes to the ATP binding site. Thr-25 contacts Mg(2+). The active site involves Lys-48. Thr-52 serves as a coordination point for substrate. ATP contacts are provided by residues Asp-56, Glu-117 to Gly-120, Ser-177 to Cys-178, and Pro-209 to Leu-211. 2 residues coordinate Mg(2+): Asp-56 and Glu-117.

This sequence belongs to the dethiobiotin synthetase family. In terms of assembly, homodimer. Mg(2+) serves as cofactor.

Its subcellular location is the cytoplasm. The catalysed reaction is (7R,8S)-7,8-diammoniononanoate + CO2 + ATP = (4R,5S)-dethiobiotin + ADP + phosphate + 3 H(+). It catalyses the reaction (7R,8S)-8-amino-7-(carboxyamino)nonanoate + ATP = (4R,5S)-dethiobiotin + ADP + phosphate + H(+). The protein operates within cofactor biosynthesis; biotin biosynthesis; biotin from 7,8-diaminononanoate: step 1/2. Its function is as follows. Catalyzes a mechanistically unusual reaction, the ATP-dependent insertion of CO2 between the N7 and N8 nitrogen atoms of 7,8-diaminopelargonic acid (DAPA, also called 7,8-diammoniononanoate) to form a ureido ring. This cyanobacterium does not encode bioA (which catalyzes the formation of the precursor for this reaction in the cannonical pathway), instead it encodes bioU, which replaces bioA and also performs the first half of the cannonical BioD reaction. Thus in this bacteria BioD has a different substrate. In Synechocystis replacement of bioU by bioA from E.coli leads to biotin synthesis, showing BioD can use the 'cannonical' 7,8-diammoniononanoate as a substrate. The polypeptide is ATP-dependent dethiobiotin synthetase BioD (Synechocystis sp. (strain ATCC 27184 / PCC 6803 / Kazusa)).